The primary structure comprises 160 residues: MGVFNYESETTSVIPAARLFKAFILEGDNLIPKVAPQAISSVENIEGNGGPGTIKKINFPEGFPFKYVKDRVDEVDHTNFKYNYSVIEGGPVGDTLEKISNEIKIVATPDGGCVLKISNKYHTKGNHEVKAEQVKASKEMGETLLRAVESYLLAHSDAYN.

Brassinolide contacts are provided by Lys55, Tyr82, Tyr84, and Asn101.

It belongs to the BetVI family.

Its subcellular location is the cytoplasm. Its function is as follows. May be a general steroid carrier protein. The chain is Major pollen allergen Bet v 1-G (BETV1G) from Betula pendula (European white birch).